A 181-amino-acid polypeptide reads, in one-letter code: MGLGRRAMVYLGLAEEDEDYLDDDDYDDGRAVGHDDRRAMHEPVPMDRTVRRIDAREEPVAMPRRPPVEPLRPAGPVPMRRVMPVEETHPYRITTLQPRSYNEARQIGEEFRDGTPVIMNLTDMDDVDAKRLVDFAAGLIFGLRGDIEKVTNKVFLLSPHNVEVTETDKRRIREGGFYNQS.

Over residues 18–27 (EDYLDDDDYD) the composition is skewed to acidic residues. A disordered region spans residues 18 to 42 (EDYLDDDDYDDGRAVGHDDRRAMHE). Positions 28–42 (DGRAVGHDDRRAMHE) are enriched in basic and acidic residues.

The protein belongs to the SepF family. Homodimer. Interacts with FtsZ.

It localises to the cytoplasm. In terms of biological role, cell division protein that is part of the divisome complex and is recruited early to the Z-ring. Probably stimulates Z-ring formation, perhaps through the cross-linking of FtsZ protofilaments. Its function overlaps with FtsA. The protein is Cell division protein SepF of Frankia alni (strain DSM 45986 / CECT 9034 / ACN14a).